Consider the following 394-residue polypeptide: NAD(P)H-quinone oxidoreductase subunit H (394 aa).

The protein belongs to the complex I 49 kDa subunit family. In terms of assembly, NDH-1 can be composed of about 15 different subunits; different subcomplexes with different compositions have been identified which probably have different functions.

It localises to the cellular thylakoid membrane. The enzyme catalyses a plastoquinone + NADH + (n+1) H(+)(in) = a plastoquinol + NAD(+) + n H(+)(out). It carries out the reaction a plastoquinone + NADPH + (n+1) H(+)(in) = a plastoquinol + NADP(+) + n H(+)(out). In terms of biological role, NDH-1 shuttles electrons from an unknown electron donor, via FMN and iron-sulfur (Fe-S) centers, to quinones in the respiratory and/or the photosynthetic chain. The immediate electron acceptor for the enzyme in this species is believed to be plastoquinone. Couples the redox reaction to proton translocation, and thus conserves the redox energy in a proton gradient. Cyanobacterial NDH-1 also plays a role in inorganic carbon-concentration. The sequence is that of NAD(P)H-quinone oxidoreductase subunit H from Trichormus variabilis (strain ATCC 29413 / PCC 7937) (Anabaena variabilis).